Here is a 158-residue protein sequence, read N- to C-terminus: NAD(P)H-quinone oxidoreductase subunit N (158 aa).

Belongs to the complex I NdhN subunit family. NDH-1 can be composed of about 15 different subunits; different subcomplexes with different compositions have been identified which probably have different functions.

The protein localises to the cellular thylakoid membrane. The enzyme catalyses a plastoquinone + NADH + (n+1) H(+)(in) = a plastoquinol + NAD(+) + n H(+)(out). It catalyses the reaction a plastoquinone + NADPH + (n+1) H(+)(in) = a plastoquinol + NADP(+) + n H(+)(out). NDH-1 shuttles electrons from an unknown electron donor, via FMN and iron-sulfur (Fe-S) centers, to quinones in the respiratory and/or the photosynthetic chain. The immediate electron acceptor for the enzyme in this species is believed to be plastoquinone. Couples the redox reaction to proton translocation, and thus conserves the redox energy in a proton gradient. Cyanobacterial NDH-1 also plays a role in inorganic carbon-concentration. The sequence is that of NAD(P)H-quinone oxidoreductase subunit N from Rippkaea orientalis (strain PCC 8801 / RF-1) (Cyanothece sp. (strain PCC 8801)).